A 204-amino-acid polypeptide reads, in one-letter code: Large ribosomal subunit protein eL15 (204 aa).

Belongs to the eukaryotic ribosomal protein eL15 family. As to quaternary structure, component of the large ribosomal subunit.

The protein localises to the cytoplasm. Functionally, component of the large ribosomal subunit. The ribosome is a large ribonucleoprotein complex responsible for the synthesis of proteins in the cell. The sequence is that of Large ribosomal subunit protein eL15 (rpl15) from Megalobrama amblycephala (Chinese blunt snout bream).